Reading from the N-terminus, the 394-residue chain is 2-oxoglutarate and iron-dependent oxygenase domain-containing protein CP2 (394 aa).

The interval 1 to 35 (MSSEQREGSQETTTTTVEGNGTIAGQNSHSAAPTT) is disordered. Positions 17 to 35 (VEGNGTIAGQNSHSAAPTT) are enriched in polar residues. A Fe2OG dioxygenase domain is found at 248 to 347 (DSHHGFVVEY…RVNMLLWCRS (100 aa)). The Fe cation site is built by histidine 268, aspartate 270, and histidine 328. Arginine 338 contacts 2-oxoglutarate.

Fe(2+) serves as cofactor. Requires L-ascorbate as cofactor. Expressed in roots, cotyledons, rosette leaves, cauline leaves, inflorescences and siliques.

The protein localises to the nucleus. Its subcellular location is the nucleoplasm. Functionally, participates in the epigenetic repression of flowering genes in association with ICU11. Functions in the repression of several members of the MADS-box transcription factors family, including SEP3, during vegetative development via histone modification. This chain is 2-oxoglutarate and iron-dependent oxygenase domain-containing protein CP2, found in Arabidopsis thaliana (Mouse-ear cress).